The sequence spans 374 residues: Cathepsin W (374 aa).

An N-terminal signal peptide occupies residues Met1–Gly21. The propeptide occupies Ile22 to Ser127. Intrachain disulfides connect Cys150–Cys191 and Cys184–Cys226. Cys153 is an active-site residue. A glycan (N-linked (GlcNAc...) asparagine) is linked at Asn205. Active-site residues include His291 and Asn329. The N-linked (GlcNAc...) asparagine glycan is linked to Asn347.

The protein belongs to the peptidase C1 family.

It localises to the endoplasmic reticulum. May have a specific function in the mechanism or regulation of T-cell cytolytic activity. This is Cathepsin W (CTSW) from Felis catus (Cat).